A 110-amino-acid polypeptide reads, in one-letter code: Large ribosomal subunit protein P2B (110 aa).

The span at T73–A88 shows a compositional bias: low complexity. Residues T73–D110 form a disordered region. Residues A91–M104 show a composition bias toward acidic residues. Phosphoserine is present on S100.

The protein belongs to the eukaryotic ribosomal protein P1/P2 family. In terms of assembly, component of the large ribosomal subunit (LSU). Mature yeast ribosomes consist of a small (40S) and a large (60S) subunit. The 40S small subunit contains 1 molecule of ribosomal RNA (18S rRNA) and at least 33 different proteins. The large 60S subunit contains 3 rRNA molecules (25S, 5.8S and 5S rRNA) and at least 46 different proteins. The acidic ribosomal P-proteins form the stalk structure of the 60S subunit. They are organized as a pentameric complex in which uL10/P0 interacts with 2 heterodimers of P1 and P2 proteins.

Its subcellular location is the cytoplasm. Component of the ribosome, a large ribonucleoprotein complex responsible for the synthesis of proteins in the cell. The small ribosomal subunit (SSU) binds messenger RNAs (mRNAs) and translates the encoded message by selecting cognate aminoacyl-transfer RNA (tRNA) molecules. The large subunit (LSU) contains the ribosomal catalytic site termed the peptidyl transferase center (PTC), which catalyzes the formation of peptide bonds, thereby polymerizing the amino acids delivered by tRNAs into a polypeptide chain. The nascent polypeptides leave the ribosome through a tunnel in the LSU and interact with protein factors that function in enzymatic processing, targeting, and the membrane insertion of nascent chains at the exit of the ribosomal tunnel. This chain is Large ribosomal subunit protein P2B (rpp202), found in Schizosaccharomyces pombe (strain 972 / ATCC 24843) (Fission yeast).